The following is a 32-amino-acid chain: Conotoxin pr6b (32 aa).

4 positions are modified to 4-hydroxyproline: proline 6, proline 13, proline 20, and proline 29. Cystine bridges form between cysteine 7-cysteine 18, cysteine 14-cysteine 23, and cysteine 17-cysteine 31.

In terms of tissue distribution, expressed by the venom duct.

It is found in the secreted. Functionally, intraperitoneal injection into fish (0.5 nmol) provokes vertical suspension and paralysis after 6 minutes. In Conus parius (Cone snail), this protein is Conotoxin pr6b.